Reading from the N-terminus, the 331-residue chain is Glycerol-3-phosphate dehydrogenase [NAD(P)+] (331 aa).

Residues Trp-11 and Lys-101 each coordinate NADPH. Residues Lys-101, Gly-132, and Ser-134 each contribute to the sn-glycerol 3-phosphate site. Ala-136 contacts NADPH. Lys-188, Asp-241, Ser-251, Arg-252, and Asn-253 together coordinate sn-glycerol 3-phosphate. The active-site Proton acceptor is the Lys-188. Arg-252 provides a ligand contact to NADPH. Glu-278 provides a ligand contact to NADPH.

The protein belongs to the NAD-dependent glycerol-3-phosphate dehydrogenase family.

Its subcellular location is the cytoplasm. It catalyses the reaction sn-glycerol 3-phosphate + NAD(+) = dihydroxyacetone phosphate + NADH + H(+). The enzyme catalyses sn-glycerol 3-phosphate + NADP(+) = dihydroxyacetone phosphate + NADPH + H(+). Its pathway is membrane lipid metabolism; glycerophospholipid metabolism. Catalyzes the reduction of the glycolytic intermediate dihydroxyacetone phosphate (DHAP) to sn-glycerol 3-phosphate (G3P), the key precursor for phospholipid synthesis. The protein is Glycerol-3-phosphate dehydrogenase [NAD(P)+] of Phytoplasma mali (strain AT).